Consider the following 197-residue polypeptide: MENRELTYITNSIAEAQRVMAAMLADERLLATVQKVADACIASIAQGGKVLLAGNGGSAADAQHIAGEFVSRFAFDRPGLPAVALTTDTSILTAIGNDYGYEKLFSRQVQALGNKGDVLIGYSTSGKSPNILAAFREAKAKGMTCVGFTGNRGGEMRELCDLLLEVPSADTPKIQEGHLVLGHIVCGLVEHSIFGKQ.

In terms of domain architecture, SIS spans 40–197; the sequence is CIASIAQGGK…LVEHSIFGKQ (158 aa). 55–57 contributes to the substrate binding site; the sequence is NGG. Positions 64 and 68 each coordinate Zn(2+). Residues glutamate 68, 97–98, 123–125, serine 128, and glutamine 175 contribute to the substrate site; these read ND and STS. Zn(2+) is bound by residues glutamine 175 and histidine 183.

It belongs to the SIS family. GmhA subfamily. As to quaternary structure, homotetramer. Zn(2+) serves as cofactor.

It is found in the cytoplasm. The catalysed reaction is 2 D-sedoheptulose 7-phosphate = D-glycero-alpha-D-manno-heptose 7-phosphate + D-glycero-beta-D-manno-heptose 7-phosphate. The protein operates within carbohydrate biosynthesis; D-glycero-D-manno-heptose 7-phosphate biosynthesis; D-glycero-alpha-D-manno-heptose 7-phosphate and D-glycero-beta-D-manno-heptose 7-phosphate from sedoheptulose 7-phosphate: step 1/1. It participates in capsule biogenesis; capsule polysaccharide biosynthesis. Its function is as follows. Catalyzes the isomerization of sedoheptulose 7-phosphate in D-glycero-D-manno-heptose 7-phosphate. This Burkholderia mallei (strain ATCC 23344) protein is Phosphoheptose isomerase.